A 593-amino-acid polypeptide reads, in one-letter code: Early nodule-specific protein 2 (593 aa).

Over residues 71 to 110 the composition is skewed to pro residues; sequence EKPPIYEPPPTEEPPPVYKPPIIHPPPNYKPPAHTPPIYH. A disordered region spans residues 71–593; sequence EKPPIYEPPP…GHYPPYKKNQ (523 aa). Composition is skewed to basic and acidic residues over residues 123 to 138 and 166 to 195; these read PYEK…EYQP and PPYE…EKPP. The segment covering 196 to 210 has biased composition (pro residues); the sequence is PEYTPPYEKPPPEYQ. Composition is skewed to basic and acidic residues over residues 227-265 and 275-292; these read PPHE…EKPP. Pro residues predominate over residues 294–306; the sequence is VHPPPEYQPPYLK. Composition is skewed to basic and acidic residues over residues 339 to 350, 360 to 372, 382 to 394, and 404 to 421; these read PPHEKPPHEHPP, PPPE…ENPP, PPHE…EHPP, and PPPE…EHPP. Over residues 422–435 the composition is skewed to pro residues; the sequence is PEYQPPQENPPPEY. Positions 506 to 522 are enriched in basic and acidic residues; that stretch reads PRHEKPMPKYQPPHEKL. Pro residues predominate over residues 532-558; it reads KTPPPQAYHPPPPIYHHPPFHPPPHVK.

It belongs to the nodulin 75 family.

Functionally, involved in early stages of root nodule development. This is Early nodule-specific protein 2 from Medicago truncatula (Barrel medic).